A 317-amino-acid polypeptide reads, in one-letter code: Melanocyte-stimulating hormone receptor (317 aa).

Residues 1-28 (MPMQGAQGRLRGSLNATPPTTPHSGLAG) are disordered. At 1–37 (MPMQGAQGRLRGSLNATPPTTPHSGLAGNQTGPWCLE) the chain is on the extracellular side. N29 carries an N-linked (GlcNAc...) asparagine glycan. Residues 38–63 (VSIPDELFLSLGLVSLVENMLVVAAI) form a helical membrane-spanning segment. The Cytoplasmic portion of the chain corresponds to 64 to 72 (AKNRNLHSP). A helical transmembrane segment spans residues 73-93 (MYYFICCLAVSDLLVSVSNVL). The Extracellular portion of the chain corresponds to 94–118 (ETAVMLLLEAGVLAAWAGVVQQLDN). A helical membrane pass occupies residues 119–140 (AIDVFICGSMVSSLCFLGAIAV). Topologically, residues 141-163 (DRYITIFYALRYHSIVTLPRARW) are cytoplasmic. The helical transmembrane segment at 164-183 (AIATIWAASVVCSTLFIAYY) threads the bilayer. Over 184–191 (DCTAVLLC) the chain is Extracellular. The helical transmembrane segment at 192-211 (LVSFFLALVVLMAVLYMHML) threads the bilayer. Residues 212–240 (ARACLHARSIARLHKRWRPVHQGLGLKGA) are Cytoplasmic-facing. The chain crosses the membrane as a helical span at residues 241-266 (ATLSILLGSFFLCWGPFFLHLTLIVL). At 267-279 (CPQHPTCSCVFKN) the chain is on the extracellular side. A helical transmembrane segment spans residues 280-300 (FKLFLTLIICNSIVDPLIYAF). At 301 to 317 (RSQELRKTLKEVLLCSW) the chain is on the cytoplasmic side. C315 carries S-palmitoyl cysteine lipidation.

The protein belongs to the G-protein coupled receptor 1 family. As to quaternary structure, interacts with MGRN1, but does not undergo MGRN1-mediated ubiquitination; this interaction competes with GNAS-binding and thus inhibits agonist-induced cAMP production. Interacts with OPN3; the interaction results in a decrease in MC1R-mediated cAMP signaling and ultimately a decrease in melanin production in melanocytes.

The protein resides in the cell membrane. In terms of biological role, receptor for MSH (alpha, beta and gamma) and ACTH. The activity of this receptor is mediated by G proteins which activate adenylate cyclase. Mediates melanogenesis, the production of eumelanin (black/brown) and phaeomelanin (red/yellow), via regulation of cAMP signaling in melanocytes. The sequence is that of Melanocyte-stimulating hormone receptor (MC1R) from Mammuthus primigenius (Siberian woolly mammoth).